The chain runs to 419 residues: Napsin-A (419 aa).

An N-terminal signal peptide occupies residues 1–16 (MSPLLLLLLCLLLGNL). Residues 73–394 (YFGTIGLGTP…KNVGPRVGLA (322 aa)) enclose the Peptidase A1 domain. N85 is a glycosylation site (N-linked (GlcNAc...) asparagine). Residue D91 is part of the active site. C104 and C111 form a disulfide bridge. 2 N-linked (GlcNAc...) asparagine glycosylation sites follow: N128 and N149. A disulfide bridge links C269 with C273. D278 is a catalytic residue. An intrachain disulfide couples C312 to C349. A glycan (N-linked (GlcNAc...) asparagine) is linked at N331. The interval 391–419 (VGLARAQSRSTDRAERRTTQAQFFKRRPG) is disordered.

This sequence belongs to the peptidase A1 family. As to expression, expressed at the highest levels in the kidney, at a moderate level in the lung, and at low levels in the spleen and adipose tissue.

The protein resides in the secreted. In terms of biological role, may be involved in processing of pneumocyte surfactant precursors. The polypeptide is Napsin-A (Napsa) (Mus musculus (Mouse)).